A 313-amino-acid polypeptide reads, in one-letter code: MIVTVTMNPSIDISYLLDHLKLDTVNRTSQVTKTPGGKGLNVTRVIHDLGGDVIATGVLGGFHGAFIANELKKANIPQAFTSIKEETRDSIAILHEGNQTEILEAGPTVSPEEISNFLENFDQLIKQAEIVTISGSLAKGLPSDFYQELVQKAHAQEVKVLLDTSGDSLRQVLQGPWKPYLIKPNLEELEGLLGQDFSENPLAAVQTALTKPMFAGIEWIVISLGKDGAIAKHHDQFYRVKIPTIQAKNPVGSGDATIAGLAYGLAKDAPAAELLKWGMAAGMANAQERMTGHVDVENVKKHLMNIQVVEIAK.

It belongs to the carbohydrate kinase PfkB family. LacC subfamily.

The catalysed reaction is D-tagatofuranose 6-phosphate + ATP = D-tagatofuranose 1,6-bisphosphate + ADP + H(+). It participates in carbohydrate metabolism; D-tagatose 6-phosphate degradation; D-glyceraldehyde 3-phosphate and glycerone phosphate from D-tagatose 6-phosphate: step 1/2. This Enterococcus faecalis (strain ATCC 700802 / V583) protein is Tagatose-6-phosphate kinase.